Reading from the N-terminus, the 291-residue chain is Polyamine aminopropyltransferase (291 aa).

Positions 5 to 245 constitute a PABS domain; it reads PGPIVLMEPL…YAVNFVLGSL (241 aa). Residue glutamine 36 coordinates S-methyl-5'-thioadenosine. Positions 67 and 91 each coordinate spermidine. S-methyl-5'-thioadenosine is bound by residues aspartate 111 and 143–144; that span reads DG. Aspartate 164 serves as the catalytic Proton acceptor.

Belongs to the spermidine/spermine synthase family. As to quaternary structure, homodimer or homotetramer.

The protein localises to the cytoplasm. It carries out the reaction norspermidine + S-adenosyl 3-(methylsulfanyl)propylamine = norspermine + S-methyl-5'-thioadenosine + H(+). It catalyses the reaction S-adenosyl 3-(methylsulfanyl)propylamine + spermidine = thermospermine + S-methyl-5'-thioadenosine + H(+). Its function is as follows. Involved in the biosynthesis of polyamines which are thought to support the growth of thermophilic microorganisms under high-temperature conditions. It seems that long-chain and branched-chain of polyamines effectively stabilize DNA and RNA, respectively. Catalyzes the irreversible transfer of a propylamine group from the amino donor S-adenosylmethioninamine (decarboxy-AdoMet) to norspermidine and 1,3-diaminopropane to yield norspermine, and to spermidine to yield thermospermine. It can also synthesize thermospermine from putrescine (1,4-diaminobutane) and caldopentamine from norspermine with a very low activity. The biosynthesis of caldohexamine and caldoheptamine from caldopentamine has been also observed. This is Polyamine aminopropyltransferase from Pyrobaculum aerophilum (strain ATCC 51768 / DSM 7523 / JCM 9630 / CIP 104966 / NBRC 100827 / IM2).